The primary structure comprises 541 residues: Tyrosine-protein kinase Yes (541 aa).

Basic and acidic residues predominate over residues 1-10 (MGCIKSKENK). The disordered stretch occupies residues 1 to 29 (MGCIKSKENKSPAIKYTPENPTEPVNTSA). Residue glycine 2 is the site of N-myristoyl glycine attachment. Cysteine 3 carries the S-palmitoyl cysteine; in membrane form lipid modification. Positions 19–29 (ENPTEPVNTSA) are enriched in polar residues. Tyrosine 32 is modified (phosphotyrosine). The region spanning 89–150 (GGVTIFVALY…PSNYVAPADS (62 aa)) is the SH3 domain. The 98-residue stretch at 156-253 (WYFGKMGRKD…GLCHKLTTVC (98 aa)) folds into the SH2 domain. One can recognise a Protein kinase domain in the interval 275–528 (LRLEVKLGQG…YIQSFLEDYF (254 aa)). ATP is bound by residues 281–289 (LGQGCFGEV) and lysine 303. Tyrosine 334 and tyrosine 343 each carry phosphotyrosine. Catalysis depends on aspartate 394, which acts as the Proton acceptor. Tyrosine 424 carries the post-translational modification Phosphotyrosine; by autocatalysis. Position 535 is a phosphotyrosine (tyrosine 535).

Interacts with YAP1 and CSF1R. Interacts with FASLG. Interacts with CTNND1; this interaction allows YES1-mediated activation of FYN and FER and subsequent phosphorylation of CTNND1. Interacts with IL6ST/gp130. Interacts with SCRIB, when YES1 is in a closed conformation; the interaction facilitates YES1 autophosphorylation. Post-translationally, phosphorylated. Phosphorylation by CSK on the C-terminal tail maintains the enzyme in an inactive state. Autophosphorylation at Tyr-424 maintains enzyme activity by blocking CSK-mediated inhibition. Palmitoylation at Cys-3 promotes membrane localization.

The protein resides in the cell membrane. Its subcellular location is the cytoplasm. It is found in the cytoskeleton. The protein localises to the microtubule organizing center. It localises to the centrosome. The protein resides in the cytosol. Its subcellular location is the cell junction. It carries out the reaction L-tyrosyl-[protein] + ATP = O-phospho-L-tyrosyl-[protein] + ADP + H(+). Its function is as follows. Non-receptor protein tyrosine kinase that is involved in the regulation of cell growth and survival, apoptosis, cell-cell adhesion, cytoskeleton remodeling, and differentiation. Stimulation by receptor tyrosine kinases (RTKs) including EGFR, PDGFR, CSF1R and FGFR leads to recruitment of YES1 to the phosphorylated receptor, and activation and phosphorylation of downstream substrates. Upon EGFR activation, promotes the phosphorylation of PARD3 to favor epithelial tight junction assembly. Participates in the phosphorylation of specific junctional components such as CTNND1 by stimulating the FYN and FER tyrosine kinases at cell-cell contacts. Upon T-cell stimulation by CXCL12, phosphorylates collapsin response mediator protein 2/DPYSL2 and induces T-cell migration. Participates in CD95L/FASLG signaling pathway and mediates AKT-mediated cell migration. Plays a role in cell cycle progression by phosphorylating the cyclin dependent kinase 4/CDK4 thus regulating the G1 phase. Also involved in G2/M progression and cytokinesis. Catalyzes phosphorylation of organic cation transporter OCT2 which induces its transport activity. The polypeptide is Tyrosine-protein kinase Yes (Yes1) (Rattus norvegicus (Rat)).